Consider the following 396-residue polypeptide: Interleukin-3 receptor subunit alpha (396 aa).

The signal sequence occupies residues 1 to 16 (MAANLWLILGLLASHS). The Extracellular portion of the chain corresponds to 17–331 (SDLAAVREAP…VCPPEVMPVK (315 aa)). Intrachain disulfides connect Cys-62–Cys-79, Cys-87–Cys-223, Cys-125–Cys-134, Cys-165–Cys-187, and Cys-245–Cys-323. The N-linked (GlcNAc...) asparagine glycan is linked to Asn-91. N-linked (GlcNAc...) asparagine glycans are attached at residues Asn-213, Asn-246, Asn-272, and Asn-283. The WSXWS motif motif lies at 312 to 316 (LSSWS). Residues 332-355 (TALVTSVATVLGAGLVAAGLLLWW) form a helical membrane-spanning segment. Over 356 to 396 (RKSLLYRLCPPIPRLRLPLAGEMVVWEPALEDCEVTPVTDA) the chain is Cytoplasmic. A Glycyl lysine isopeptide (Lys-Gly) (interchain with G-Cter in ubiquitin) cross-link involves residue Lys-357. The Box 1 motif signature appears at 363 to 371 (LCPPIPRLR).

It belongs to the type I cytokine receptor family. Type 5 subfamily. Interacts with IL3. Heterodimer of an alpha and a beta subunit. The beta subunit is common to the IL3, IL5 and GM-CSF receptors. Post-translationally, ubiquitinated at Lys-357 by RNFT2 in response to IL3. Ubiquitination leads ligand-induced degradation by the proteasome. Ubiquitinated by RNF128 via 'Lys-27'-linked polyubiquitination, facilitating its degradation through the lysosomal pathway.

It is found in the cell membrane. Its subcellular location is the endomembrane system. Cell surface receptor for IL3 expressed on hematopoietic progenitor cells, monocytes and B-lymphocytes that controls the production and differentiation of hematopoietic progenitor cells into lineage-restricted cells. Ligand stimulation rapidly induces hetrodimerization with IL3RB, phosphorylation and enzyme activity of effector proteins such as JAK2 and PI3K that play a role in signaling cell proliferation and differentiation. Activation of JAK2 leads to STAT5-mediated transcriptional program. The protein is Interleukin-3 receptor subunit alpha (Il3ra) of Mus musculus (Mouse).